A 210-amino-acid chain; its full sequence is Large ribosomal subunit protein bL25 (210 aa).

The segment at 175–210 (IATILPPQQEEEIDSGEQQEAGQPDAAEGRETTPEE) is disordered. Basic and acidic residues predominate over residues 201 to 210 (AEGRETTPEE).

This sequence belongs to the bacterial ribosomal protein bL25 family. CTC subfamily. As to quaternary structure, part of the 50S ribosomal subunit; part of the 5S rRNA/L5/L18/L25 subcomplex. Contacts the 5S rRNA. Binds to the 5S rRNA independently of L5 and L18.

Its function is as follows. This is one of the proteins that binds to the 5S RNA in the ribosome where it forms part of the central protuberance. This is Large ribosomal subunit protein bL25 from Geobacillus kaustophilus (strain HTA426).